The sequence spans 201 residues: Molybdenum cofactor guanylyltransferase (201 aa).

Residues 15 to 17, K28, D74, and D104 contribute to the GTP site; that span reads LAG. D104 contributes to the Mg(2+) binding site.

It belongs to the MobA family. As to quaternary structure, monomer. It depends on Mg(2+) as a cofactor.

Its subcellular location is the cytoplasm. The enzyme catalyses Mo-molybdopterin + GTP + H(+) = Mo-molybdopterin guanine dinucleotide + diphosphate. In terms of biological role, transfers a GMP moiety from GTP to Mo-molybdopterin (Mo-MPT) cofactor (Moco or molybdenum cofactor) to form Mo-molybdopterin guanine dinucleotide (Mo-MGD) cofactor. This chain is Molybdenum cofactor guanylyltransferase, found in Pseudomonas syringae pv. tomato (strain ATCC BAA-871 / DC3000).